We begin with the raw amino-acid sequence, 710 residues long: Cyclomaltodextrin glucanotransferase (710 aa).

A signal peptide spans 1–27 (MKKTFKLILVLMLSLTLVFGLTAPIQA). 6 residues coordinate Ca(2+): Asp-54, Asn-56, Asn-59, Asn-60, Gly-78, and Asp-80. Position 128–129 (128–129 (YW)) interacts with substrate. Ca(2+) is bound at residue Asn-167. Residue His-168 coordinates substrate. Ile-218 is a binding site for Ca(2+). Residue 221–224 (NLFD) participates in substrate binding. Asp-227 is a binding site for Ca(2+). Residue Arg-255 coordinates substrate. Residue Asp-257 is the Nucleophile of the active site. 260–261 (KH) contacts substrate. His-261 is a binding site for Ca(2+). Glu-285 functions as the Proton donor in the catalytic mechanism. Residues His-355, Asp-398, and Arg-402 each contribute to the substrate site. One can recognise an IPT/TIG domain in the interval 526 to 603 (PLIGHVGPTM…GATSNTYNNI (78 aa)). Positions 605–710 (ILTGNQICVR…TGTVIVNWQQ (106 aa)) constitute a CBM20 domain.

The protein belongs to the glycosyl hydrolase 13 family. Ca(2+) serves as cofactor.

The protein localises to the secreted. It carries out the reaction Cyclizes part of a (1-&gt;4)-alpha-D-glucan chain by formation of a (1-&gt;4)-alpha-D-glucosidic bond.. Degrades starch to alpha-, beta-, and gamma-cyclodextrins, as well as linear sugars. This is Cyclomaltodextrin glucanotransferase (amyA) from Thermoanaerobacterium thermosulfurigenes (Clostridium thermosulfurogenes).